A 158-amino-acid polypeptide reads, in one-letter code: MVPKLFTSQICLLLLLGLSSLEVSLHAKPQQFSWAQWFRIQHIQTTPLHCTYAMRAINRYQPRCKNRNTFLHTTFADVVNVCGNTNMTCPGNASLNNCHHSGVRVPLTYCNLTGPQTISNCVYSSTQANMFYVVACDNRDPRDPPQYPVVPVHLDTII.

An N-terminal signal peptide occupies residues 1 to 27; sequence MVPKLFTSQICLLLLLGLSSLEVSLHA. A glycan (C-linked (Man) tryptophan) is linked at W34. The active-site Proton acceptor is the H42. The residue at position 60 (Y60) is a 3'-nitrotyrosine. 65 to 69 contacts substrate; sequence KNRNT. N86, N92, and N111 each carry an N-linked (GlcNAc...) asparagine glycan. H153 acts as the Proton donor in catalysis.

Belongs to the pancreatic ribonuclease family. Interacts with and forms a tight 1:1 complex with RNH1. Dimerization of two such complexes may occur.

It localises to the lysosome. It is found in the cytoplasmic granule. It carries out the reaction an [RNA] containing cytidine + H2O = an [RNA]-3'-cytidine-3'-phosphate + a 5'-hydroxy-ribonucleotide-3'-[RNA].. The enzyme catalyses an [RNA] containing uridine + H2O = an [RNA]-3'-uridine-3'-phosphate + a 5'-hydroxy-ribonucleotide-3'-[RNA].. In terms of biological role, this is a non-secretory ribonuclease. It is a pyrimidine specific nuclease with a slight preference for U. Cytotoxin and helminthotoxin. Possesses a wide variety of biological activities. In Saguinus labiatus (Red-chested mustached tamarin), this protein is Non-secretory ribonuclease (RNASE2).